The chain runs to 290 residues: Sodium/potassium-transporting ATPase subunit beta-2 (290 aa).

At 1-39 (MVIQKEKKSCGQVVEEWKEFVWNPRTHQFMGRTGTSWAF) the chain is on the cytoplasmic side. The helical; Signal-anchor for type II membrane protein transmembrane segment at 40-67 (ILLFYLVFYGFLTAMFTLTMWVMLQTVS) threads the bilayer. The Extracellular segment spans residues 68 to 290 (DHTPKYQDRL…VAFKLRINKT (223 aa)). Asparagine 96 and asparagine 118 each carry an N-linked (GlcNAc...) asparagine glycan. Cysteine 129 and cysteine 150 are joined by a disulfide. 2 N-linked (GlcNAc...) asparagine glycosylation sites follow: asparagine 153 and asparagine 159. Cysteine 160 and cysteine 177 are joined by a disulfide. 3 N-linked (GlcNAc...) asparagine glycosylation sites follow: asparagine 193, asparagine 197, and asparagine 238. Positions 193–290 (NQSMNVTCAG…VAFKLRINKT (98 aa)) are immunoglobulin-like. An intrachain disulfide couples cysteine 200 to cysteine 261.

It belongs to the X(+)/potassium ATPases subunit beta family. As to quaternary structure, the sodium/potassium-transporting ATPase is composed of a catalytic alpha subunit, an auxiliary non-catalytic beta subunit and an additional regulatory subunit. Interacts with isoform 2 of BSG.

It localises to the cell membrane. Functionally, this is the non-catalytic component of the active enzyme, which catalyzes the hydrolysis of ATP coupled with the exchange of Na(+) and K(+) ions across the plasma membrane. The exact function of the beta-2 subunit is not known. Mediates cell adhesion of neurons and astrocytes, and promotes neurite outgrowth. The chain is Sodium/potassium-transporting ATPase subunit beta-2 (ATP1B2) from Homo sapiens (Human).